The following is a 147-amino-acid chain: Hemoglobin subunit epsilon (147 aa).

The region spanning 3 to 147 (HFTAEEKAAV…VAIALAHKYH (145 aa)) is the Globin domain. Phosphoserine occurs at positions 14 and 51. 2 residues coordinate heme b: His64 and His93.

Belongs to the globin family. In terms of assembly, heterotetramer of two alpha chains and two epsilon chains in early embryonic hemoglobin Gower-2; two zeta chains and two epsilon chains in early embryonic hemoglobin Gower-1. Red blood cells.

Its function is as follows. The epsilon chain is a beta-type chain of early mammalian embryonic hemoglobin. The chain is Hemoglobin subunit epsilon (HBE1) from Pan troglodytes (Chimpanzee).